A 184-amino-acid polypeptide reads, in one-letter code: Guanylate kinase (184 aa).

Residues 5-183 (KKLIILTGPS…TAKRIIKLIQ (179 aa)) form the Guanylate kinase-like domain. 12–19 (GPSGVGKG) contacts ATP.

Belongs to the guanylate kinase family.

It is found in the cytoplasm. The catalysed reaction is GMP + ATP = GDP + ADP. Its function is as follows. Essential for recycling GMP and indirectly, cGMP. This is Guanylate kinase from Prochlorococcus marinus (strain MIT 9312).